The chain runs to 312 residues: 4-diphosphocytidyl-2-C-methyl-D-erythritol kinase (312 aa).

K16 is a catalytic residue. 101–111 (PIGAGLAGGSS) contributes to the ATP binding site. D143 is an active-site residue.

It belongs to the GHMP kinase family. IspE subfamily.

It catalyses the reaction 4-CDP-2-C-methyl-D-erythritol + ATP = 4-CDP-2-C-methyl-D-erythritol 2-phosphate + ADP + H(+). The protein operates within isoprenoid biosynthesis; isopentenyl diphosphate biosynthesis via DXP pathway; isopentenyl diphosphate from 1-deoxy-D-xylulose 5-phosphate: step 3/6. In terms of biological role, catalyzes the phosphorylation of the position 2 hydroxy group of 4-diphosphocytidyl-2C-methyl-D-erythritol. The chain is 4-diphosphocytidyl-2-C-methyl-D-erythritol kinase from Prochlorococcus marinus subsp. pastoris (strain CCMP1986 / NIES-2087 / MED4).